The primary structure comprises 394 residues: Homoserine O-succinyltransferase (394 aa).

The 315-residue stretch at 54 to 368 (NAVLICHALS…SSPAGHDAFL (315 aa)) folds into the AB hydrolase-1 domain. The Nucleophile role is filled by Ser160. Arg236 contacts substrate. Catalysis depends on residues Asp331 and His364. Asp365 contributes to the substrate binding site.

Belongs to the AB hydrolase superfamily. MetX family. As to quaternary structure, homodimer.

It localises to the cytoplasm. It catalyses the reaction L-homoserine + succinyl-CoA = O-succinyl-L-homoserine + CoA. It functions in the pathway amino-acid biosynthesis; L-methionine biosynthesis via de novo pathway; O-succinyl-L-homoserine from L-homoserine: step 1/1. Functionally, transfers a succinyl group from succinyl-CoA to L-homoserine, forming succinyl-L-homoserine. The sequence is that of Homoserine O-succinyltransferase from Magnetococcus marinus (strain ATCC BAA-1437 / JCM 17883 / MC-1).